The chain runs to 677 residues: Regulator of G-protein signaling 9 (677 aa).

The DEP domain occupies 30–105 (PETGVRMQNQ…PDSSLYRFQT (76 aa)). The G protein gamma domain maps to 219 to 280 (VTAVRKEIMY…ITDDTQFWDL (62 aa)). One can recognise an RGS domain in the interval 295-416 (RWAFNFSELI…SPIYKEMLAK (122 aa)). Disordered stretches follow at residues 530 to 571 (SSGL…RAPL) and 639 to 677 (DSGP…GKAG).

In terms of assembly, heterodimer with GNB5. Interacts with RGS7BP, leading to regulate the subcellular location of the heterodimer formed with GNB5. Component of the RGS9-1-Gbeta5 complex composed of RGS9 (RGS9-1), Gbeta5 (GNB5) and RGS9BP. Interacts with PDE6G and GNAT1. Expressed in the central nervous system. Isoform RGS9L is found in striatum, hypothalamus and nucleus accumbens while isoform RGS9S is expressed in retina and pineal gland.

It localises to the membrane. Inhibits signal transduction by increasing the GTPase activity of G protein alpha subunits thereby driving them into their inactive GDP-bound form. Binds to GNAT1. Involved in phototransduction; key element in the recovery phase of visual transduction. This chain is Regulator of G-protein signaling 9 (Rgs9), found in Rattus norvegicus (Rat).